A 316-amino-acid chain; its full sequence is tRNA dimethylallyltransferase (316 aa).

Position 17–24 (17–24) interacts with ATP; that stretch reads GPTASGKT. 19-24 lines the substrate pocket; the sequence is TASGKT. Interaction with substrate tRNA stretches follow at residues 42-45, 166-170, 247-252, and 280-287; these read DSAL, QRLSR, RCVGYR, and KRQITWLR.

The protein belongs to the IPP transferase family. As to quaternary structure, monomer. Mg(2+) is required as a cofactor.

The enzyme catalyses adenosine(37) in tRNA + dimethylallyl diphosphate = N(6)-dimethylallyladenosine(37) in tRNA + diphosphate. Functionally, catalyzes the transfer of a dimethylallyl group onto the adenine at position 37 in tRNAs that read codons beginning with uridine, leading to the formation of N6-(dimethylallyl)adenosine (i(6)A). This chain is tRNA dimethylallyltransferase, found in Enterobacter sp. (strain 638).